Here is a 195-residue protein sequence, read N- to C-terminus: Nucleoside triphosphate pyrophosphatase (195 aa).

Catalysis depends on aspartate 76, which acts as the Proton acceptor.

It belongs to the Maf family. A divalent metal cation serves as cofactor.

The protein localises to the cytoplasm. It catalyses the reaction a ribonucleoside 5'-triphosphate + H2O = a ribonucleoside 5'-phosphate + diphosphate + H(+). The catalysed reaction is a 2'-deoxyribonucleoside 5'-triphosphate + H2O = a 2'-deoxyribonucleoside 5'-phosphate + diphosphate + H(+). Functionally, nucleoside triphosphate pyrophosphatase. May have a dual role in cell division arrest and in preventing the incorporation of modified nucleotides into cellular nucleic acids. The polypeptide is Nucleoside triphosphate pyrophosphatase (Pelagibacter ubique (strain HTCC1062)).